The chain runs to 627 residues: WPP domain-interacting tail-anchored protein 2 (627 aa).

3 coiled-coil regions span residues 81 to 152 (CGIL…RRTL), 188 to 218 (LEKSLSRELELEKKLMEFQQNEEQLKLKLHY), and 312 to 542 (TLRE…KILR). The interval 577 to 597 (SLQEDERTREEPEKQSVSEKS) is disordered. Over residues 580–597 (EDERTREEPEKQSVSEKS) the composition is skewed to basic and acidic residues. A helical membrane pass occupies residues 606 to 626 (LKHILVVALVFVLFCSFFGVT).

As to quaternary structure, component of Ran complexes at least composed of WIT1 or WIT2, RANGAP1 or RANGAP2, and WIP1 or WIP2 or WIP3. Interacts with KAKU1. Core component of the LINC complex which is composed of inner nuclear membrane SUN domain-containing proteins coupled to outer nuclear membrane WIP and WIT proteins. The LINC complex also involves nucleoskeletal proteins CRWN/LINC and possibly KAKU4 and the cytoskeletal myosin KAKU1. Interacts with WIP1, WIP2 and WIP3. In terms of tissue distribution, ubiquitous.

The protein resides in the membrane. Functionally, together with WIT1, required for the nuclear envelope docking of RANGAP proteins in root tips. Plays a role in nuclear shape determination. As component of the SUN-WIP-WIT2-KAKU1 complex, mediates the transfer of cytoplasmic forces to the nuclear envelope (NE), leading to nuclear shape changes. The chain is WPP domain-interacting tail-anchored protein 2 (WIT2) from Arabidopsis thaliana (Mouse-ear cress).